The following is an 81-amino-acid chain: Conotoxin Eb11.3 (81 aa).

A signal peptide spans 1–23 (MMFRLTSVWCLLVIVLLNSAVDG). Disulfide bonds link cysteine 27–cysteine 41, cysteine 34–cysteine 48, cysteine 40–cysteine 56, and cysteine 47–cysteine 62. Leucine 69 bears the Leucine amide mark. Positions 73–81 (AQYKRFFRR) are excised as a propeptide.

The protein belongs to the conotoxin I2 superfamily. As to expression, expressed by the venom duct.

The protein resides in the secreted. The sequence is that of Conotoxin Eb11.3 from Conus eburneus (Ivory cone).